A 421-amino-acid chain; its full sequence is 3-isopropylmalate dehydratase large subunit (421 aa).

3 residues coordinate [4Fe-4S] cluster: Cys-300, Cys-360, and Cys-363.

Belongs to the aconitase/IPM isomerase family. LeuC type 2 subfamily. As to quaternary structure, heterodimer of LeuC and LeuD. [4Fe-4S] cluster serves as cofactor.

The enzyme catalyses (2R,3S)-3-isopropylmalate = (2S)-2-isopropylmalate. It functions in the pathway amino-acid biosynthesis; L-leucine biosynthesis; L-leucine from 3-methyl-2-oxobutanoate: step 2/4. Functionally, catalyzes the isomerization between 2-isopropylmalate and 3-isopropylmalate, via the formation of 2-isopropylmaleate. The sequence is that of 3-isopropylmalate dehydratase large subunit from Thermodesulfovibrio yellowstonii (strain ATCC 51303 / DSM 11347 / YP87).